The sequence spans 90 residues: DNA-binding protein HU-beta (90 aa).

Belongs to the bacterial histone-like protein family. Heterodimer of an alpha and a beta chain.

In terms of biological role, histone-like DNA-binding protein which is capable of wrapping DNA to stabilize it, and thus to prevent its denaturation under extreme environmental conditions. In Escherichia coli O6:H1 (strain CFT073 / ATCC 700928 / UPEC), this protein is DNA-binding protein HU-beta (hupB).